The primary structure comprises 183 residues: Protein jagunal homolog 1 (183 aa).

Topologically, residues 1 to 39 (MASRAGPRAAGTDGSDFQHRERVAMHYQMSVTLKYEIKK) are cytoplasmic. Ser3 bears the Phosphoserine mark. Residues 40 to 60 (LIYVHLVIWLLLVAKMSVGHL) traverse the membrane as a helical segment. The Lumenal segment spans residues 61–71 (RLLSHDQVAMP). The helical transmembrane segment at 72-92 (YQWEYPYLLSVVPSLLGLLSF) threads the bilayer. The Cytoplasmic segment spans residues 93–96 (PRNN). A helical membrane pass occupies residues 97–117 (ISYLVLSMISMGLFSIAPLIY). Residues 118 to 137 (GSMEMFPAAQQLYRHGKAYR) lie on the Lumenal side of the membrane. Residues 138-158 (FLFGFSAVSVMYLVLVLAVQV) form a helical membrane-spanning segment. The Cytoplasmic portion of the chain corresponds to 159 to 183 (HAWQLYYSKKLLDSWFTSTQEKKRK).

This sequence belongs to the jagunal family. In terms of assembly, interacts with COPA, COPB2 and COPG2.

It localises to the endoplasmic reticulum membrane. Functionally, endoplasmic reticulum transmembrane protein involved in vesicle-mediated transport, which is required for neutrophil function. Required for vesicle-mediated transport; it is however unclear whether it is involved in early secretory pathway or intracellular protein transport. Acts as a regulator of neutrophil function, probably via its role in vesicle-mediated transport: required for defense against fungal pathogens and for granulocyte colony-stimulating factor (GM-CSF) signaling pathway; possibly by regulating glycosylation and/or targeting of proteins contributing to the viability and migration of neutrophils. This chain is Protein jagunal homolog 1 (JAGN1), found in Bos taurus (Bovine).